The chain runs to 180 residues: uncharacterized protein (180 aa).

The protein to H.influenzae HI_0656.1.

This is an uncharacterized protein from Escherichia coli (strain K12).